The sequence spans 206 residues: Ephrin-A4 (206 aa).

Positions 1–25 (MRLLPLLRTVLWAALLGSRLPGCSS) are cleaved as a signal peptide. The region spanning 26–158 (LRHPIYWNSS…RLQVSVCCKE (133 aa)) is the Ephrin RBD domain. An N-linked (GlcNAc...) asparagine glycan is attached at Asn33. The short motif at 41–43 (RGD) is the Cell attachment site element. Intrachain disulfides connect Cys58/Cys99 and Cys86/Cys147. N-linked (GlcNAc...) asparagine glycosylation is present at Asn98. The disordered stretch occupies residues 161 to 180 (SSHESAHPVGSPGESGTSGW). Residue Ser175 is the site of GPI-anchor amidated serine attachment. The propeptide at 176–206 (GTSGWRGGHAPSPLCLLLLLLLPILRLLRVL) is removed in mature form.

It belongs to the ephrin family. Expressed in myogenic progenitor cells.

It localises to the cell membrane. Cell surface GPI-bound ligand for Eph receptors, a family of receptor tyrosine kinases which are crucial for migration, repulsion and adhesion during neuronal, vascular and epithelial development. Binds promiscuously Eph receptors residing on adjacent cells, leading to contact-dependent bidirectional signaling into neighboring cells. May play a role in the interaction between activated B-lymphocytes and dendritic cells in tonsils. The chain is Ephrin-A4 (Efna4) from Mus musculus (Mouse).